Here is a 108-residue protein sequence, read N- to C-terminus: Small ribosomal subunit protein bS6 (108 aa).

This sequence belongs to the bacterial ribosomal protein bS6 family.

Its function is as follows. Binds together with bS18 to 16S ribosomal RNA. This is Small ribosomal subunit protein bS6 from Trichormus variabilis (strain ATCC 29413 / PCC 7937) (Anabaena variabilis).